We begin with the raw amino-acid sequence, 396 residues long: Elongation factor Tu (396 aa).

A tr-type G domain is found at 11-205 (KPHVNIGTIG…TVDEYVPTPE (195 aa)). The segment at 20–27 (GHVDHGKT) is G1. 20–27 (GHVDHGKT) lines the GTP pocket. Residue threonine 27 coordinates Mg(2+). The tract at residues 61–65 (GITIN) is G2. The G3 stretch occupies residues 82-85 (DAPG). Residues 82–86 (DAPGH) and 137–140 (NKTD) contribute to the GTP site. A G4 region spans residues 137–140 (NKTD). Residues 175–177 (SAL) form a G5 region.

This sequence belongs to the TRAFAC class translation factor GTPase superfamily. Classic translation factor GTPase family. EF-Tu/EF-1A subfamily. As to quaternary structure, monomer.

Its subcellular location is the cytoplasm. It catalyses the reaction GTP + H2O = GDP + phosphate + H(+). Its function is as follows. GTP hydrolase that promotes the GTP-dependent binding of aminoacyl-tRNA to the A-site of ribosomes during protein biosynthesis. In Latilactobacillus sakei subsp. sakei (strain 23K) (Lactobacillus sakei subsp. sakei), this protein is Elongation factor Tu.